Reading from the N-terminus, the 154-residue chain is 17.4 kDa class I heat shock protein (154 aa).

Positions Asp40 to Gly154 constitute a sHSP domain.

This sequence belongs to the small heat shock protein (HSP20) family. As to quaternary structure, may form oligomeric structures.

The protein resides in the cytoplasm. In Oryza sativa subsp. japonica (Rice), this protein is 17.4 kDa class I heat shock protein (HSP17.4).